The primary structure comprises 98 residues: uncharacterized protein (98 aa).

The tract at residues 1 to 63 is disordered; that stretch reads MPRDKKLVHR…NGHSQPAIVA (63 aa). Over residues 14 to 29 the composition is skewed to acidic residues; that stretch reads DVEDEDNDQREEEWSD. Residues 48-57 are compositionally biased toward polar residues; that stretch reads EPSSASNGHS.

This is an uncharacterized protein from Aedes vexans (Inland floodwater mosquito).